A 156-amino-acid chain; its full sequence is 6,7-dimethyl-8-ribityllumazine synthase (156 aa).

Residues Trp22, 56–58, and 80–82 contribute to the 5-amino-6-(D-ribitylamino)uracil site; these read AYE and AVI. Position 85 to 86 (85 to 86) interacts with (2S)-2-hydroxy-3-oxobutyl phosphate; sequence DT. Residue His88 is the Proton donor of the active site. Phe113 contributes to the 5-amino-6-(D-ribitylamino)uracil binding site. Arg127 contributes to the (2S)-2-hydroxy-3-oxobutyl phosphate binding site.

The protein belongs to the DMRL synthase family.

It catalyses the reaction (2S)-2-hydroxy-3-oxobutyl phosphate + 5-amino-6-(D-ribitylamino)uracil = 6,7-dimethyl-8-(1-D-ribityl)lumazine + phosphate + 2 H2O + H(+). It functions in the pathway cofactor biosynthesis; riboflavin biosynthesis; riboflavin from 2-hydroxy-3-oxobutyl phosphate and 5-amino-6-(D-ribitylamino)uracil: step 1/2. Functionally, catalyzes the formation of 6,7-dimethyl-8-ribityllumazine by condensation of 5-amino-6-(D-ribitylamino)uracil with 3,4-dihydroxy-2-butanone 4-phosphate. This is the penultimate step in the biosynthesis of riboflavin. The sequence is that of 6,7-dimethyl-8-ribityllumazine synthase from Deinococcus deserti (strain DSM 17065 / CIP 109153 / LMG 22923 / VCD115).